Here is an 803-residue protein sequence, read N- to C-terminus: DNA polymerase 2 (803 aa).

Belongs to the DNA polymerase type-B family.

It catalyses the reaction DNA(n) + a 2'-deoxyribonucleoside 5'-triphosphate = DNA(n+1) + diphosphate. In Aeropyrum pernix (strain ATCC 700893 / DSM 11879 / JCM 9820 / NBRC 100138 / K1), this protein is DNA polymerase 2 (polB).